The chain runs to 397 residues: MAAPDPYKPGKYNDPAGGVESSIGPQTQTQYWMKQALIDARKEAYFGQLASVFGMPKHYGKKIVRMHYIPLLDDRNINDQGIDASGATIANGNLYGSSRDVGTIVGKMPTLTEVGGRVNRVGFKRVLLEGKLEKYGFFREYTQESLDFDSDAELDMHVGREMLKGANEMTEDLLQIDLLNSAGVVRYPGAATQDSEVDATTEVTYDSLMRLNIDLDNNRAPKGTKMITGTRMIDTRTIPGCRPLYCGSELIPTLKAMKDNHGNPAFISIEKYAAGGNTFIGEIGAIDQFRIIINPQMMHWQGAGKAVDPAADGYHDFNDKYSIFPMLVISSEAFTTVGFQTDGKNVKFKIYNKKPGEATADRLDPYGEMGFMSIKWYYGFMVYRPEWIALIKTVARL.

Residues 1 to 24 are disordered; that stretch reads MAAPDPYKPGKYNDPAGGVESSIG.

It is found in the virion. Assembles to form an icosahedral capsid. The polypeptide is Major capsid protein (Pseudomonas phage KPP21).